The sequence spans 313 residues: tRNA-cytidine(32) 2-sulfurtransferase (313 aa).

Positions 54–59 (SGGKDS) match the PP-loop motif motif. [4Fe-4S] cluster contacts are provided by Cys-129, Cys-132, and Cys-220.

The protein belongs to the TtcA family. In terms of assembly, homodimer. Requires Mg(2+) as cofactor. It depends on [4Fe-4S] cluster as a cofactor.

The protein localises to the cytoplasm. The enzyme catalyses cytidine(32) in tRNA + S-sulfanyl-L-cysteinyl-[cysteine desulfurase] + AH2 + ATP = 2-thiocytidine(32) in tRNA + L-cysteinyl-[cysteine desulfurase] + A + AMP + diphosphate + H(+). The protein operates within tRNA modification. Functionally, catalyzes the ATP-dependent 2-thiolation of cytidine in position 32 of tRNA, to form 2-thiocytidine (s(2)C32). The sulfur atoms are provided by the cysteine/cysteine desulfurase (IscS) system. This is tRNA-cytidine(32) 2-sulfurtransferase from Methylibium petroleiphilum (strain ATCC BAA-1232 / LMG 22953 / PM1).